A 585-amino-acid polypeptide reads, in one-letter code: ATP-dependent lipid A-core flippase (585 aa).

The next 6 membrane-spanning stretches (helical) occupy residues 18-38, 68-88, 142-162, 163-183, 255-275, and 277-297; these read LWPT…ALVL, LMAV…FISS, SNAL…LAVM, IATS…IAVL, PIVQ…ATIP, and IMSQ…MLAM. The ABC transmembrane type-1 domain occupies 30-313; sequence IAAAAALVLN…LTNVNSQFQR (284 aa). The region spanning 345 to 581 is the ABC transporter domain; that stretch reads VSFKDVSFTY…NGAYKQLHKM (237 aa). ATP is bound at residue 379-386; it reads GRSGSGKS.

Belongs to the ABC transporter superfamily. Lipid exporter (TC 3.A.1.106) family. Homodimer.

The protein localises to the cell inner membrane. The catalysed reaction is ATP + H2O + lipid A-core oligosaccharideSide 1 = ADP + phosphate + lipid A-core oligosaccharideSide 2.. In terms of biological role, involved in lipopolysaccharide (LPS) biosynthesis. Translocates lipid A-core from the inner to the outer leaflet of the inner membrane. Transmembrane domains (TMD) form a pore in the inner membrane and the ATP-binding domain (NBD) is responsible for energy generation. The sequence is that of ATP-dependent lipid A-core flippase from Mannheimia succiniciproducens (strain KCTC 0769BP / MBEL55E).